The sequence spans 428 residues: Magnesium transporter MRS2-C (428 aa).

Helical transmembrane passes span 364-384 (LLLT…GVFG) and 400-420 (WTLV…IWYF). The short motif at 384-386 (GMN) is the Required for magnesium transport activity element.

The protein belongs to the CorA metal ion transporter (MIT) (TC 1.A.35.5) family.

It is found in the membrane. Functionally, magnesium transporter that may mediate the influx of magnesium. The polypeptide is Magnesium transporter MRS2-C (Oryza sativa subsp. indica (Rice)).